The following is a 555-amino-acid chain: MNKKQNFYAAIIVAIFLCLQLSHGSSGVSFEKTPAIKIVGNKFFDSESGEQFFIKGIAYQLQRSEEELSNANGAFETSYIDALADPKICLRDIPFLKMLGVNTLRVYAIDPTKSHDICMEALSAEGMYVLLDLSEPDISINRENPSWDVHIFERYKSVIDAMSSFPNLLGYFAGNEVTNDHTNTFASPFVKAAIRDAKEYISHSNHRKIPVGYSTNDDAMTRDNLARYFVCGDVKADFYGINMYEWCGYSTYGTSGYRERTKEFEGYPIPVFFSEFGCNLVRPRPFTEVSALYGNKMSSVWSGGLAYMYFEEENEYGVVKINDNDGVDILPDFKNLKKEFAKADPKGITEEEYLTAKEPTEVESVECPHIAVGVWEANEKLPETPDRSKCACLDEILPCEIVPFGAESGKYEEYFSYLCSKVDCSDILANGKTGEYGEFSDCSVEQKLSLQLSKLYCKIGANDRHCPLNDKNVYFNLESLQPLTSESICKNVFDSIRNITYNHGDYSKSNPSRSKESLNVKYPSSEERENDGTIAFKTSGFVILLISMIAAGILL.

Positions 1–24 (MNKKQNFYAAIIVAIFLCLQLSHG) are cleaved as a signal peptide. A disulfide bridge connects residues Cys89 and Cys118. (1,3-beta-D-glucosyl)n contacts are provided by residues Tyr107, 134 to 142 (SEPDISINR), Asn175, Glu176, Asp217, and Arg222. Catalysis depends on Glu176, which acts as the Proton donor. 6 cysteine pairs are disulfide-bonded: Cys231–Cys367, Cys247–Cys278, Cys390–Cys442, Cys392–Cys489, Cys399–Cys466, and Cys419–Cys424. Residue Glu275 is the Nucleophile of the active site. (1,3-beta-D-glucosyl)n is bound at residue Tyr307. An N-linked (GlcNAc...) asparagine glycan is attached at Asn498. Asp531 carries GPI-anchor amidated aspartate lipidation. Residues 532–555 (GTIAFKTSGFVILLISMIAAGILL) constitute a propeptide, removed in mature form.

This sequence belongs to the glycosyl hydrolase 72 family. Post-translationally, N-glycosylated.

Its subcellular location is the cell membrane. In terms of biological role, splits internally a 1,3-beta-glucan molecule and transfers the newly generated reducing end (the donor) to the non-reducing end of another 1,3-beta-glucan molecule (the acceptor) forming a 1,3-beta linkage, resulting in the elongation of 1,3-beta-glucan chains in the cell wall. Involved in spore wall assembly. In Saccharomyces cerevisiae (strain ATCC 204508 / S288c) (Baker's yeast), this protein is 1,3-beta-glucanosyltransferase GAS2 (GAS2).